The sequence spans 304 residues: MNQNKNYRVLFSNLYKDTQMQENAKMSEHINFRVGGPVDILLTPNTKEQIVETINICKENKIPFYVLGNGSNVLVKDSGIRGVVIKLSEFDNIVRDGNTIKAESGALLKDVSAEALKASLTGFEFACGIPGSVGGAVFMNAGAYDGEISFVIKEAEVMSEDGKIITLSKDQLELGYRTSAIMKKNYIVITATFCFESGEKDKIEGRVSELTNKREEKQPLEFPSAGSTFKRPEGHFAGKLIQDAGLKDFTLGGAAVSGKHCGFIINKSNATAKDILDLIEYIQKEVKKQFGVDLYPEVRIIGED.

One can recognise an FAD-binding PCMH-type domain in the interval 33-198 (RVGGPVDILL…ITATFCFESG (166 aa)). Arg177 is an active-site residue. Ser227 functions as the Proton donor in the catalytic mechanism. The active site involves Glu297.

It belongs to the MurB family. FAD serves as cofactor.

It is found in the cytoplasm. It carries out the reaction UDP-N-acetyl-alpha-D-muramate + NADP(+) = UDP-N-acetyl-3-O-(1-carboxyvinyl)-alpha-D-glucosamine + NADPH + H(+). It participates in cell wall biogenesis; peptidoglycan biosynthesis. Its function is as follows. Cell wall formation. In Clostridium botulinum (strain Eklund 17B / Type B), this protein is UDP-N-acetylenolpyruvoylglucosamine reductase.